Consider the following 473-residue polypeptide: MSSDNNNDPFDLNEDGHDYFNRVSTTTSPNRQSINSSPKQSSPKSTNNNDDKNNIILDLNDNNNDNNNTNNYNDEDIDVDNKNKFENKDNTYNSNGGSNNKNKNKKKDNKSNNSSDNEEADENTSLISDSEPLLNKKEKDDEQIEIENLDGEDYDDEVSLQDFSSMIVSIIIPVSITMMAVVFFVKYLNNQTLYASTLSYTIAGGSSGGGSGADSITGNSFVDSLIVAGIVLGMIIVTTVAFVLLYKYRCLKILYGWLFLSVGMMLGSFGTTFFQAMLSAANLPLDYITFAFLIFNFTVCGIIGVFWYAHQYVNQLYLVIISVLMAISLTRLPQWTIFTLLVIVAIYDLFAVLCPRGPLKVLVELSQERNENIPALVYETGKGSDSNLKLGLGDFIFYSLLISRAALVHMSCVFSTFIAILTGLFLTLLCLAIFKKALPALPISIFLGILFYYLSNNFLTPFIEALTLSQIFV.

A disordered region spans residues 1 to 141 (MSSDNNNDPF…PLLNKKEKDD (141 aa)). The Cytoplasmic segment spans residues 1-164 (MSSDNNNDPF…DDEVSLQDFS (164 aa)). The span at 22 to 46 (RVSTTTSPNRQSINSSPKQSSPKST) shows a compositional bias: polar residues. Positions 54–72 (NIILDLNDNNNDNNNTNNY) are enriched in low complexity. The segment covering 79-89 (VDNKNKFENKD) has biased composition (basic and acidic residues). Residues 165–185 (SMIVSIIIPVSITMMAVVFFV) traverse the membrane as a helical segment. Residues 186–224 (KYLNNQTLYASTLSYTIAGGSSGGGSGADSITGNSFVDS) lie on the Lumenal side of the membrane. The N-linked (GlcNAc...) asparagine glycan is linked to asparagine 190. Residues 225–245 (LIVAGIVLGMIIVTTVAFVLL) form a helical membrane-spanning segment. Topologically, residues 246–252 (YKYRCLK) are cytoplasmic. The chain crosses the membrane as a helical span at residues 253-273 (ILYGWLFLSVGMMLGSFGTTF). At 274-286 (FQAMLSAANLPLD) the chain is on the lumenal side. The chain crosses the membrane as a helical span at residues 287–307 (YITFAFLIFNFTVCGIIGVFW). Position 308 (tyrosine 308) is a topological domain, cytoplasmic. Residues 309 to 329 (AHQYVNQLYLVIISVLMAISL) form a helical membrane-spanning segment. Residues 330 to 334 (TRLPQ) lie on the Lumenal side of the membrane. Residues 335–355 (WTIFTLLVIVAIYDLFAVLCP) traverse the membrane as a helical segment. Aspartate 348 is a catalytic residue. The Cytoplasmic portion of the chain corresponds to 356–389 (RGPLKVLVELSQERNENIPALVYETGKGSDSNLK). A helical membrane pass occupies residues 390–410 (LGLGDFIFYSLLISRAALVHM). Aspartate 394 is a catalytic residue. The Lumenal segment spans residues 411–413 (SCV). A helical transmembrane segment spans residues 414 to 434 (FSTFIAILTGLFLTLLCLAIF). Over 435 to 442 (KKALPALP) the chain is Cytoplasmic. A PAL motif is present at residues 439 to 441 (PAL). The segment at residues 443–463 (ISIFLGILFYYLSNNFLTPFI) is an intramembrane region (helical). At 464–473 (EALTLSQIFV) the chain is on the cytoplasmic side.

It belongs to the peptidase A22A family. In terms of assembly, homodimer. Component of the gamma-secretase complex, a complex composed of a presenilin homodimer, nicastrin, aph1 and pen2.

The protein localises to the endoplasmic reticulum membrane. It is found in the golgi apparatus membrane. Its function is as follows. Probable catalytic subunit of the gamma-secretase complex, an endoprotease complex that catalyzes the intramembrane cleavage of integral membrane proteins such as Notch receptors. Requires the other members of the gamma-secretase complex to have a protease activity. The polypeptide is Presenilin-B (psenB) (Dictyostelium discoideum (Social amoeba)).